Consider the following 1342-residue polypeptide: DNA-directed RNA polymerase subunit beta (1342 aa).

It belongs to the RNA polymerase beta chain family. As to quaternary structure, the RNAP catalytic core consists of 2 alpha, 1 beta, 1 beta' and 1 omega subunit. When a sigma factor is associated with the core the holoenzyme is formed, which can initiate transcription.

It catalyses the reaction RNA(n) + a ribonucleoside 5'-triphosphate = RNA(n+1) + diphosphate. DNA-dependent RNA polymerase catalyzes the transcription of DNA into RNA using the four ribonucleoside triphosphates as substrates. The protein is DNA-directed RNA polymerase subunit beta of Photorhabdus laumondii subsp. laumondii (strain DSM 15139 / CIP 105565 / TT01) (Photorhabdus luminescens subsp. laumondii).